The primary structure comprises 141 residues: Nucleoside diphosphate kinase (141 aa).

Residues lysine 11, phenylalanine 59, arginine 87, threonine 93, arginine 104, and asparagine 114 each coordinate ATP. Catalysis depends on histidine 117, which acts as the Pros-phosphohistidine intermediate.

Belongs to the NDK family. Mg(2+) is required as a cofactor.

The protein localises to the cytoplasm. The catalysed reaction is a 2'-deoxyribonucleoside 5'-diphosphate + ATP = a 2'-deoxyribonucleoside 5'-triphosphate + ADP. It catalyses the reaction a ribonucleoside 5'-diphosphate + ATP = a ribonucleoside 5'-triphosphate + ADP. Major role in the synthesis of nucleoside triphosphates other than ATP. The ATP gamma phosphate is transferred to the NDP beta phosphate via a ping-pong mechanism, using a phosphorylated active-site intermediate. This is Nucleoside diphosphate kinase from Staphylothermus marinus (strain ATCC 43588 / DSM 3639 / JCM 9404 / F1).